Consider the following 39-residue polypeptide: Photosystem II reaction center protein Y (39 aa).

Residues 4 to 22 (TLVVFAPIIAALAWVIFNI) traverse the membrane as a helical segment.

It belongs to the PsbY family. In terms of assembly, PSII is composed of 1 copy each of membrane proteins PsbA, PsbB, PsbC, PsbD, PsbE, PsbF, PsbH, PsbI, PsbJ, PsbK, PsbL, PsbM, PsbT, PsbX, PsbY, Psb30/Ycf12, peripheral proteins PsbO, CyanoQ (PsbQ), PsbU, PsbV and a large number of cofactors. It forms dimeric complexes.

The protein resides in the cellular thylakoid membrane. In terms of biological role, loosely associated component of the core of photosystem II (PSII), it is not always seen in crystals. PSII is a light-driven water plastoquinone oxidoreductase, using light energy to abstract electrons from H(2)O, generating a proton gradient subsequently used for ATP formation. In Prochlorococcus marinus (strain MIT 9515), this protein is Photosystem II reaction center protein Y.